The chain runs to 252 residues: Imidazole glycerol phosphate synthase subunit HisF (252 aa).

Catalysis depends on residues Asp-11 and Asp-130.

The protein belongs to the HisA/HisF family. In terms of assembly, heterodimer of HisH and HisF.

It localises to the cytoplasm. The catalysed reaction is 5-[(5-phospho-1-deoxy-D-ribulos-1-ylimino)methylamino]-1-(5-phospho-beta-D-ribosyl)imidazole-4-carboxamide + L-glutamine = D-erythro-1-(imidazol-4-yl)glycerol 3-phosphate + 5-amino-1-(5-phospho-beta-D-ribosyl)imidazole-4-carboxamide + L-glutamate + H(+). It functions in the pathway amino-acid biosynthesis; L-histidine biosynthesis; L-histidine from 5-phospho-alpha-D-ribose 1-diphosphate: step 5/9. IGPS catalyzes the conversion of PRFAR and glutamine to IGP, AICAR and glutamate. The HisF subunit catalyzes the cyclization activity that produces IGP and AICAR from PRFAR using the ammonia provided by the HisH subunit. The polypeptide is Imidazole glycerol phosphate synthase subunit HisF (Petrotoga mobilis (strain DSM 10674 / SJ95)).